A 325-amino-acid polypeptide reads, in one-letter code: 5-dehydro-2-deoxygluconokinase (325 aa).

Belongs to the carbohydrate kinase PfkB family.

It catalyses the reaction 5-dehydro-2-deoxy-D-gluconate + ATP = 6-phospho-5-dehydro-2-deoxy-D-gluconate + ADP + H(+). It functions in the pathway polyol metabolism; myo-inositol degradation into acetyl-CoA; acetyl-CoA from myo-inositol: step 5/7. In terms of biological role, catalyzes the phosphorylation of 5-dehydro-2-deoxy-D-gluconate (2-deoxy-5-keto-D-gluconate or DKG) to 6-phospho-5-dehydro-2-deoxy-D-gluconate (DKGP). This chain is 5-dehydro-2-deoxygluconokinase, found in Listeria monocytogenes serovar 1/2a (strain ATCC BAA-679 / EGD-e).